A 458-amino-acid polypeptide reads, in one-letter code: UDP-N-acetylmuramoylalanine--D-glutamate ligase (458 aa).

ATP is bound at residue 124 to 130; sequence GSDGKTT.

Belongs to the MurCDEF family.

Its subcellular location is the cytoplasm. It carries out the reaction UDP-N-acetyl-alpha-D-muramoyl-L-alanine + D-glutamate + ATP = UDP-N-acetyl-alpha-D-muramoyl-L-alanyl-D-glutamate + ADP + phosphate + H(+). Its pathway is cell wall biogenesis; peptidoglycan biosynthesis. Functionally, cell wall formation. Catalyzes the addition of glutamate to the nucleotide precursor UDP-N-acetylmuramoyl-L-alanine (UMA). The protein is UDP-N-acetylmuramoylalanine--D-glutamate ligase of Clostridium botulinum (strain Langeland / NCTC 10281 / Type F).